A 559-amino-acid chain; its full sequence is Sporulation protein kinase mde3 (559 aa).

The Protein kinase domain occupies 21–323; sequence YLVKQKLGDG…TAKYCKEVFF (303 aa). Residues 27 to 35 and Lys-53 each bind ATP; that span reads LGDGSFGTV. Asp-150 serves as the catalytic Proton acceptor.

Belongs to the protein kinase superfamily. Ser/Thr protein kinase family.

It catalyses the reaction L-seryl-[protein] + ATP = O-phospho-L-seryl-[protein] + ADP + H(+). The catalysed reaction is L-threonyl-[protein] + ATP = O-phospho-L-threonyl-[protein] + ADP + H(+). Functionally, protein kinase which is essential for spore formation. This Schizosaccharomyces pombe (strain 972 / ATCC 24843) (Fission yeast) protein is Sporulation protein kinase mde3 (mde3).